The following is a 324-amino-acid chain: Biotin synthase (324 aa).

The 228-residue stretch at 42-269 folds into the Radical SAM core domain; the sequence is NEVQISSLLN…KSYIRLAAGR (228 aa). [4Fe-4S] cluster contacts are provided by Cys-57, Cys-61, and Cys-64. Residues Cys-101, Cys-132, Cys-192, and Arg-264 each contribute to the [2Fe-2S] cluster site.

Belongs to the radical SAM superfamily. Biotin synthase family. In terms of assembly, homodimer. [4Fe-4S] cluster serves as cofactor. The cofactor is [2Fe-2S] cluster.

It catalyses the reaction (4R,5S)-dethiobiotin + (sulfur carrier)-SH + 2 reduced [2Fe-2S]-[ferredoxin] + 2 S-adenosyl-L-methionine = (sulfur carrier)-H + biotin + 2 5'-deoxyadenosine + 2 L-methionine + 2 oxidized [2Fe-2S]-[ferredoxin]. The protein operates within cofactor biosynthesis; biotin biosynthesis; biotin from 7,8-diaminononanoate: step 2/2. Its function is as follows. Catalyzes the conversion of dethiobiotin (DTB) to biotin by the insertion of a sulfur atom into dethiobiotin via a radical-based mechanism. The chain is Biotin synthase from Ehrlichia canis (strain Jake).